The following is a 118-amino-acid chain: Holo-[acyl-carrier-protein] synthase (118 aa).

Mg(2+)-binding residues include aspartate 5 and glutamate 50.

This sequence belongs to the P-Pant transferase superfamily. AcpS family. The cofactor is Mg(2+).

The protein localises to the cytoplasm. It catalyses the reaction apo-[ACP] + CoA = holo-[ACP] + adenosine 3',5'-bisphosphate + H(+). Its function is as follows. Transfers the 4'-phosphopantetheine moiety from coenzyme A to a Ser of acyl-carrier-protein. This Wolinella succinogenes (strain ATCC 29543 / DSM 1740 / CCUG 13145 / JCM 31913 / LMG 7466 / NCTC 11488 / FDC 602W) (Vibrio succinogenes) protein is Holo-[acyl-carrier-protein] synthase.